Consider the following 101-residue polypeptide: Signal recognition particle 19 kDa protein (101 aa).

It belongs to the SRP19 family. Part of the signal recognition particle protein translocation system, which is composed of SRP and FtsY. Archaeal SRP consists of a 7S RNA molecule of 300 nucleotides and two protein subunits: SRP54 and SRP19.

It localises to the cytoplasm. Its function is as follows. Involved in targeting and insertion of nascent membrane proteins into the cytoplasmic membrane. Binds directly to 7S RNA and mediates binding of the 54 kDa subunit of the SRP. The chain is Signal recognition particle 19 kDa protein from Methanosarcina mazei (strain ATCC BAA-159 / DSM 3647 / Goe1 / Go1 / JCM 11833 / OCM 88) (Methanosarcina frisia).